A 610-amino-acid chain; its full sequence is Ubiquilin-like protein (610 aa).

The Ubiquitin-like domain maps to 31-105 (IRVIVKTPGN…IHVVIKSKHG (75 aa)). The 46-residue stretch at 562–607 (QAPEVRFSKEMECLQAMGFVNYNANLQALIATDGDTNAAIYKLKSS) folds into the UBA domain.

This is Ubiquilin-like protein (Ubqlnl) from Mus musculus (Mouse).